Consider the following 793-residue polypeptide: von Willebrand factor A domain-containing protein 5A (793 aa).

The 131-residue stretch at 1 to 131 folds into the VIT domain; sequence MEHHCGLITS…KVAVTLRYVQ (131 aa). The region spanning 281–469 is the VWFA domain; sequence EFVFLMDRSG…FALQCAVDNI (189 aa). Tyrosine 622 is modified (phosphotyrosine).

Its function is as follows. May play a role in tumorigenesis as a tumor suppressor. Altered expression of this protein and disruption of the molecular pathway it is involved in may contribute directly to or modify tumorigenesis. The protein is von Willebrand factor A domain-containing protein 5A (Vwa5a) of Mus musculus (Mouse).